Here is a 415-residue protein sequence, read N- to C-terminus: Serine--tRNA ligase (415 aa).

Residue 231–233 (TAE) coordinates L-serine. 262–264 (RSE) serves as a coordination point for ATP. L-serine is bound at residue Glu285. 349-352 (EISS) is an ATP binding site. Ser383 lines the L-serine pocket.

The protein belongs to the class-II aminoacyl-tRNA synthetase family. Type-1 seryl-tRNA synthetase subfamily. In terms of assembly, homodimer. The tRNA molecule binds across the dimer.

It is found in the cytoplasm. The catalysed reaction is tRNA(Ser) + L-serine + ATP = L-seryl-tRNA(Ser) + AMP + diphosphate + H(+). It catalyses the reaction tRNA(Sec) + L-serine + ATP = L-seryl-tRNA(Sec) + AMP + diphosphate + H(+). The protein operates within aminoacyl-tRNA biosynthesis; selenocysteinyl-tRNA(Sec) biosynthesis; L-seryl-tRNA(Sec) from L-serine and tRNA(Sec): step 1/1. Catalyzes the attachment of serine to tRNA(Ser). Is also able to aminoacylate tRNA(Sec) with serine, to form the misacylated tRNA L-seryl-tRNA(Sec), which will be further converted into selenocysteinyl-tRNA(Sec). The polypeptide is Serine--tRNA ligase (Helicobacter pylori (strain P12)).